A 269-amino-acid chain; its full sequence is Chymotrypsin-like elastase family member 2A (269 aa).

A signal peptide spans 1 to 16; that stretch reads MIRALLLSTLVAGALS. Positions 17-28 are cleaved as a propeptide — activation peptide; the sequence is CGLPANLPQLPR. Residues 29 to 267 form the Peptidase S1 domain; it reads VVGGEDARPN…YIDWINSVIA (239 aa). A disulfide bond links Cys58 and Cys74. Catalysis depends on charge relay system residues His73 and Asp121. 3 cysteine pairs are disulfide-bonded: Cys155/Cys222, Cys186/Cys202, and Cys212/Cys243. The Charge relay system role is filled by Ser216.

It belongs to the peptidase S1 family. Elastase subfamily. As to quaternary structure, interacts with CPA1. Interacts with SERPINA1. Pancreas.

It is found in the secreted. The enzyme catalyses Preferential cleavage: Leu-|-Xaa, Met-|-Xaa and Phe-|-Xaa. Hydrolyzes elastin.. Its function is as follows. Elastase that enhances insulin signaling and might have a physiologic role in cellular glucose metabolism. Circulates in plasma and reduces platelet hyperactivation, triggers both insulin secretion and degradation, and increases insulin sensitivity. This is Chymotrypsin-like elastase family member 2A (CELA2A) from Sus scrofa (Pig).